A 159-amino-acid chain; its full sequence is Protein US8.5 (159 aa).

The segment at Ser27–Gly107 is disordered. The segment covering Ser80–Pro91 has biased composition (basic and acidic residues).

The protein belongs to the HHV-1 US8.5 protein family. In terms of processing, phosphorylated.

Its subcellular location is the host nucleus. It localises to the host nucleolus. This is Protein US8.5 from Human herpesvirus 1 (strain 17) (HHV-1).